Reading from the N-terminus, the 183-residue chain is Ribosome-recycling factor (183 aa).

Belongs to the RRF family.

It is found in the cytoplasm. Responsible for the release of ribosomes from messenger RNA at the termination of protein biosynthesis. May increase the efficiency of translation by recycling ribosomes from one round of translation to another. The polypeptide is Ribosome-recycling factor (Deinococcus deserti (strain DSM 17065 / CIP 109153 / LMG 22923 / VCD115)).